Here is a 306-residue protein sequence, read N- to C-terminus: D-aminoacyl-tRNA deacylase (306 aa).

This sequence belongs to the DtdA deacylase family. As to quaternary structure, monomer. Zn(2+) is required as a cofactor.

It catalyses the reaction a D-aminoacyl-tRNA + H2O = a tRNA + a D-alpha-amino acid + H(+). The catalysed reaction is glycyl-tRNA(Ala) + H2O = tRNA(Ala) + glycine + H(+). Its function is as follows. D-aminoacyl-tRNA deacylase with broad substrate specificity. By recycling D-aminoacyl-tRNA to D-amino acids and free tRNA molecules, this enzyme counteracts the toxicity associated with the formation of D-aminoacyl-tRNA entities in vivo. The chain is D-aminoacyl-tRNA deacylase from Methanosarcina barkeri (strain Fusaro / DSM 804).